Reading from the N-terminus, the 86-residue chain is F(1)-ATPase inhibitor STF1, mitochondrial (86 aa).

Residues 1 to 23 (MLNRCISRNTRLPVNLRIASRFY) constitute a mitochondrion transit peptide. S24 carries the phosphoserine modification.

This sequence belongs to the ATPase inhibitor family. Monomer and homodimer. Monomeric at pH 5.0 and dimeric at either pH 6.5 or 8.0. The protein aggregates increasingly strongly with increasing pH.

Its subcellular location is the mitochondrion. Functionally, endogenous low-affinity ATPase inhibitor, which inhibits specifically the reverse ATPase reaction of mitochondrial F(1)F(0)-type ATP synthase. Found to stabilize, together with STF2, a complex of intrinsic ATPase inhibitor INH1 and proton-translocating ATPase in mitochondrial membranes. Binds directly to purified F1-ATPase. This Saccharomyces cerevisiae (strain ATCC 204508 / S288c) (Baker's yeast) protein is F(1)-ATPase inhibitor STF1, mitochondrial (STF1).